The chain runs to 116 residues: uncharacterized protein (116 aa).

This is an uncharacterized protein from Acidianus filamentous virus 1 (isolate United States/Yellowstone) (AFV-1).